A 201-amino-acid polypeptide reads, in one-letter code: FMN-dependent NADH:quinone oxidoreductase (201 aa).

92 to 95 is an FMN binding site; the sequence is MWNL.

Belongs to the azoreductase type 1 family. In terms of assembly, homodimer. FMN is required as a cofactor.

It catalyses the reaction 2 a quinone + NADH + H(+) = 2 a 1,4-benzosemiquinone + NAD(+). The enzyme catalyses N,N-dimethyl-1,4-phenylenediamine + anthranilate + 2 NAD(+) = 2-(4-dimethylaminophenyl)diazenylbenzoate + 2 NADH + 2 H(+). Quinone reductase that provides resistance to thiol-specific stress caused by electrophilic quinones. Functionally, also exhibits azoreductase activity. Catalyzes the reductive cleavage of the azo bond in aromatic azo compounds to the corresponding amines. The protein is FMN-dependent NADH:quinone oxidoreductase of Caldicellulosiruptor saccharolyticus (strain ATCC 43494 / DSM 8903 / Tp8T 6331).